The primary structure comprises 78 residues: Acyl carrier protein (78 aa).

Positions 2–77 constitute a Carrier domain; that stretch reads DELFLRMRAL…DAYEFIKSKV (76 aa). Ser-37 carries the post-translational modification O-(pantetheine 4'-phosphoryl)serine.

It belongs to the acyl carrier protein (ACP) family. In terms of processing, 4'-phosphopantetheine is transferred from CoA to a specific serine of apo-ACP by AcpS. This modification is essential for activity because fatty acids are bound in thioester linkage to the sulfhydryl of the prosthetic group.

The protein resides in the cytoplasm. It functions in the pathway lipid metabolism; fatty acid biosynthesis. Carrier of the growing fatty acid chain in fatty acid biosynthesis. This chain is Acyl carrier protein, found in Treponema pallidum (strain Nichols).